The chain runs to 386 residues: Succinate--CoA ligase [ADP-forming] subunit beta (386 aa).

In terms of domain architecture, ATP-grasp spans 9–244 (KEILRSYGVS…LDEEDPKEVE (236 aa)). Residues lysine 46, 53–55 (GRG), glutamate 99, cysteine 102, and glutamate 107 contribute to the ATP site. 2 residues coordinate Mg(2+): asparagine 199 and aspartate 213. Residues asparagine 264 and 321–323 (GIM) contribute to the substrate site.

The protein belongs to the succinate/malate CoA ligase beta subunit family. Heterotetramer of two alpha and two beta subunits. Mg(2+) is required as a cofactor.

The enzyme catalyses succinate + ATP + CoA = succinyl-CoA + ADP + phosphate. It carries out the reaction GTP + succinate + CoA = succinyl-CoA + GDP + phosphate. Its pathway is carbohydrate metabolism; tricarboxylic acid cycle; succinate from succinyl-CoA (ligase route): step 1/1. Functionally, succinyl-CoA synthetase functions in the citric acid cycle (TCA), coupling the hydrolysis of succinyl-CoA to the synthesis of either ATP or GTP and thus represents the only step of substrate-level phosphorylation in the TCA. The beta subunit provides nucleotide specificity of the enzyme and binds the substrate succinate, while the binding sites for coenzyme A and phosphate are found in the alpha subunit. This is Succinate--CoA ligase [ADP-forming] subunit beta from Geobacillus thermodenitrificans (strain NG80-2).